The sequence spans 151 residues: UPF0178 protein CPS_3584 (151 aa).

This sequence belongs to the UPF0178 family.

In Colwellia psychrerythraea (strain 34H / ATCC BAA-681) (Vibrio psychroerythus), this protein is UPF0178 protein CPS_3584.